Reading from the N-terminus, the 1469-residue chain is ABC transporter G family member 36 (1469 aa).

At M1 the chain carries N-acetylmethionine. Residues S37, S38, and S40 each carry the phosphoserine modification. T43 carries the post-translational modification Phosphothreonine. Phosphoserine is present on S45. The 274-residue stretch at 171–444 (LGMIGIQFAK…FESFGFKCPE (274 aa)) folds into the ABC transporter 1 domain. 204 to 211 (GPPSSGKT) serves as a coordination point for ATP. The ABC transmembrane type-2 1 domain occupies 522–735 (ELLKSCWDKE…AFNGLVVNEM (214 aa)). 7 consecutive transmembrane segments (helical) span residues 540–560 (FFYV…STLF), 575–595 (LYIG…FAEM), 621–641 (LPTF…WMVV), 659–679 (FLLV…IASV), 685–705 (IANT…GFLL), 713–733 (WWGW…LVVN), and 772–792 (ISVG…TLAL). Residues 806–852 (PEEENEDADQGKDPMRRSLSTADGNRRGEVAMGRMSRDSAAEASGGA) are disordered. Phosphoserine occurs at positions 825, 841, and 844. Positions 829 to 845 (GNRRGEVAMGRMSRDSA) are enriched in basic and acidic residues. The region spanning 867-1119 (MSFDDVKYFV…KVVEYFESFP (253 aa)) is the ABC transporter 2 domain. Residue 912–919 (GVSGAGKT) participates in ATP binding. The ABC transmembrane type-2 2 domain maps to 1192-1406 (GQFKSCLWKQ…TVYGLIVSQY (215 aa)). A run of 7 helical transmembrane segments spans residues 1216 to 1236 (FIFT…IGGN), 1239 to 1259 (NAGD…FVGI), 1299 to 1319 (LPYV…MVGF), 1326 to 1346 (FFWF…YGMM), 1356 to 1376 (VASI…GFFI), 1384 to 1404 (WWIW…LIVS), and 1441 to 1461 (PVAA…AFCI).

The protein belongs to the ABC transporter superfamily. ABCG family. PDR (TC 3.A.1.205) subfamily. As to quaternary structure, interacts, in a Ca(2+)-dependent manner, with calmodulins CaM3, CaM7 and several CaM-like proteins (CML8, CML9, CML12/CAL4, CML37 and CML38), as well as with calcium regulated proteins CBL4/SOS3 and KIC. Phosphorylated upon perception of pathogen-associated molecular patterns (PAMPs); phosphorylations at Ser-40 and Ser-45, which likely regulate transport activity, are required for plant defense against pathogens (e.g. Blumeria graminis), but dispensable for recruitment to the host-pathogen interface and penetration sites. Phosphorylation at Ser-841 seems to be required for protein stability. In terms of tissue distribution, ubiquitous (at protein level). Higher levels in root hairs, stomata, epidermal cells, and hydathodes. Concentrated at the infection site of infected plants, including papillae and haustoria. Accumulates at the periphery of lateral root cap and root epidermal cells, especially in the outer lateral membrane domain facing the environment.

The protein localises to the cell membrane. It is found in the golgi apparatus. It localises to the trans-Golgi network membrane. The protein resides in the endoplasmic reticulum membrane. Together with ABCG37, regulates auxin homeostasis and responses by playing a dual role in coumarin (e.g. esculin) and in the auxin precursor indole 3-butyric acid (IBA) efflux transport, thus influencing cotyledons, roots and root hairs development. Mediates the transport (export into the apoplast) of distinct indole-type metabolites in distinct biological processes; a precursor of 4-O-beta-D-glucosyl-indol-3-yl formamide (4OGlcI3F), a pathogen-inducible tryptophan-derived compound (e.g. upon Blumeria graminis conidiospore inoculation), being a probable substrate in extracellular pathogen defense. Involved in the cellular detoxification of xenobiotics by promoting the excretion of some auxinic herbicides including 4-(2,4-dichlorophenoxy)butyric acid (2,4-DB) and other members of the phenoxyalkanoic acid family but not 2,4-dichlorophenoxyacetic acid (2,4-D). Mediates thymidine exudation in the rhizosphere. May be a transporter of lignin precursors during tracheary element differentiation. Key factor that controls the extent of cell death in the defense response. Necessary for both callose deposition and glucosinolate activation in response to pathogens. As a central component of nonhost resistance (NHR), required for limiting invasion by nonadapted pathogens including powdery mildews (e.g. Blumeria graminis and Erysiphe pisi), root-penetrating pathogenic fungi (e.g. Fusarium oxysporum), Phakopsora pachyrhizi and Colletotrichum gloeosporioides (anthracnose fungi), probably by sensing Ca(2+) via interactions with calmodulins (e.g. CaM7). Confers resistance to cadmium (Cd) and lead (Pb), probably as an efflux pump of Cd2+ or Cd conjugates, and possibly, of chemicals that mediate pathogen resistance. Promotes resistance to abiotic stresses (e.g. drought and salt stress) and favors general growth by preventing sodium accumulation in plants. Required for microbe-associated molecular patterns (MAMPs)- and salicylic acid (SA)-dependent hypersensitive cell death (HR), involving indole glucosinolate breakdown products (e.g. indole-3-acetonitrile), probably in a PEN2 myrosinase-dependent metabolic pathway, triggered by the recognition of effectors from incompatible pathogens including oomycetes and bacteria (e.g. AvrRpm1 and AvrRps4) and benzothiadiazole- (BTH), and leading to an induced protection against pathogens (e.g. Pseudomonas syringae pv. tomato DC3000, Golovinomyces orontii and Hyaloperonospora arabidopsidis). The protein is ABC transporter G family member 36 of Arabidopsis thaliana (Mouse-ear cress).